A 323-amino-acid chain; its full sequence is Zinc finger C2HC domain-containing protein 1A (323 aa).

The C2HC/C3H-type 1 zinc finger occupies 7-36 (ELRPCKICGRTFFPATLKKHVPICQKTSVK). Positions 11, 14, 26, and 30 each coordinate Zn(2+). The segment at 35-75 (VKKRKTFESSRQRAEGTDINTVKPVKPRPEPPKKQSNWKRK) is disordered. Positions 40 to 50 (TFESSRQRAEG) are enriched in basic and acidic residues. The segment at 110–139 (DYVQCPYCQRRFNQNAADRHINFCKEQSAR) adopts a C2HC/C3H-type 2 zinc-finger fold. Cys-114, Cys-117, His-129, and Cys-133 together coordinate Zn(2+). The segment at 138–273 (ARMGQKIKGG…EAAMGYDSSD (136 aa)) is disordered. A compositionally biased stretch (polar residues) spans 208 to 226 (KYQTQSPAHKNSTMVTSPQ).

The protein belongs to the ZC2HC1 family. Zn(2+) is required as a cofactor.

The chain is Zinc finger C2HC domain-containing protein 1A (zc2hc1a) from Xenopus laevis (African clawed frog).